Consider the following 506-residue polypeptide: RNA-splicing ligase RtcB homolog (506 aa).

The Mn(2+) site is built by Asp-120, Cys-123, His-228, His-260, and His-354. 227–231 lines the GMP pocket; that stretch reads NHYAE. GMP-binding positions include 354–355, 403–406, Ser-410, 429–432, and Lys-505; these read HN, GGSM, and HGAG. The active-site GMP-histidine intermediate is the His-429.

Belongs to the RtcB family. In terms of assembly, catalytic component of the tRNA-splicing ligase complex. The cofactor is Mn(2+).

It catalyses the reaction a 3'-end 3'-phospho-ribonucleotide-RNA + a 5'-end dephospho-ribonucleoside-RNA + GTP = a ribonucleotidyl-ribonucleotide-RNA + GMP + diphosphate. The catalysed reaction is a 3'-end 2',3'-cyclophospho-ribonucleotide-RNA + a 5'-end dephospho-ribonucleoside-RNA + GTP + H2O = a ribonucleotidyl-ribonucleotide-RNA + GMP + diphosphate + H(+). Catalytic subunit of the tRNA-splicing ligase complex that acts by directly joining spliced tRNA halves to mature-sized tRNAs by incorporating the precursor-derived splice junction phosphate into the mature tRNA as a canonical 3',5'-phosphodiester. May act as an RNA ligase with broad substrate specificity, and may function toward other RNAs. The sequence is that of RNA-splicing ligase RtcB homolog from Anopheles gambiae (African malaria mosquito).